The following is a 533-amino-acid chain: Calcium-dependent protein kinase 12 (533 aa).

The segment at 1–77 is disordered; sequence MGNCFTKTYE…RASGGGGEMG (77 aa). Glycine 2 is lipidated: N-myristoyl glycine. Positions 26 to 38 are enriched in basic and acidic residues; that stretch reads ERSKARGGDEPGT. Residues 57-69 are compositionally biased toward low complexity; the sequence is GSSSAAGALSRRA. Residues 91-349 enclose the Protein kinase domain; that stretch reads YQLDRKLGSG…ASQALEHRWL (259 aa). ATP-binding positions include 97–105 and lysine 120; that span reads LGSGQFGTT. Aspartate 215 acts as the Proton acceptor in catalysis. An autoinhibitory domain region spans residues 354–384; the sequence is ASDRPIDSAVLSRMKQFKAMNKLKQLALKVI. 4 consecutive EF-hand domains span residues 391–426, 427–462, 463–498, and 499–533; these read EEIK…LGSR, ISEA…KHKL, EKEE…YGMG, and DEAN…GIQT. 20 residues coordinate Ca(2+): aspartate 404, aspartate 406, serine 408, threonine 410, glutamate 415, aspartate 440, aspartate 442, serine 444, serine 446, glutamate 451, aspartate 476, aspartate 478, serine 480, tyrosine 482, glutamate 487, aspartate 511, aspartate 513, aspartate 515, arginine 517, and glutamate 522.

Belongs to the protein kinase superfamily. Ser/Thr protein kinase family. CDPK subfamily. In terms of tissue distribution, expressed in roots, leaf blades and developing seeds. Expressed in vascular tissues of roots and leaf blades. Expressed in the phloem tissue of the large vascular bundle in leaf blades.

Its subcellular location is the membrane. It carries out the reaction L-seryl-[protein] + ATP = O-phospho-L-seryl-[protein] + ADP + H(+). It catalyses the reaction L-threonyl-[protein] + ATP = O-phospho-L-threonyl-[protein] + ADP + H(+). Its activity is regulated as follows. Activated by calcium. Autophosphorylation may play an important role in the regulation of the kinase activity. May play a role in signal transduction pathways that involve calcium as a second messenger. Functions in signal transduction pathways that positively regulate responses to low-nitrogen. Functions in multiple signaling pathways, positively regulating salt tolerance and negatively modulating rice blast fungus resistance. May promote tolerance to salt stress by negatively regulating NADPH oxidase and positively regulating reactive oxygen species (ROS) scavengers. This chain is Calcium-dependent protein kinase 12, found in Oryza sativa subsp. japonica (Rice).